Consider the following 105-residue polypeptide: Large ribosomal subunit protein uL23 (105 aa).

The protein belongs to the universal ribosomal protein uL23 family. In terms of assembly, part of the 50S ribosomal subunit. Contacts protein L29, and trigger factor when it is bound to the ribosome.

One of the early assembly proteins it binds 23S rRNA. One of the proteins that surrounds the polypeptide exit tunnel on the outside of the ribosome. Forms the main docking site for trigger factor binding to the ribosome. The polypeptide is Large ribosomal subunit protein uL23 (Janthinobacterium sp. (strain Marseille) (Minibacterium massiliensis)).